A 481-amino-acid polypeptide reads, in one-letter code: Ammonium transporter 2 member 3 (481 aa).

Residues 1-36 are Extracellular-facing; the sequence is MNFNSSKYISHLPESLLPNDASPEWNNKADNAWQLT. The N-linked (GlcNAc...) asparagine glycan is linked to Asn4. A helical transmembrane segment spans residues 37 to 57; it reads AATLVGLQTVPGLVILYGSMV. Residues 58–62 lie on the Cytoplasmic side of the membrane; sequence KKKWA. A helical membrane pass occupies residues 63–83; it reads VNSAFMALYAFAAVLVCWVLW. At 84-123 the chain is on the extracellular side; the sequence is AHHMAFGTKLLPFVGKPNFALSQKFLLSKASTNYYLPMAD. The helical transmembrane segment at 124–144 threads the bilayer; the sequence is FVFYQFAFAAITLVLLGGSLL. Topologically, residues 145–151 are cytoplasmic; sequence GRMNFYA. Residues 152–172 form a helical membrane-spanning segment; the sequence is WMLFVPLWLTLSYTVGAFTIW. Over 173 to 184 the chain is Extracellular; it reads GNGFLEGKIIDY. The helical transmembrane segment at 185-205 threads the bilayer; sequence AGGFVIHLSSGVAGFTAAYWV. Residues 206-220 lie on the Cytoplasmic side of the membrane; it reads GPRTSNDRQNFPPNN. A helical transmembrane segment spans residues 221-241; sequence IIHMLGGAGFLWMGWTGFNGG. At 242–248 the chain is on the extracellular side; sequence APFQVGE. Residues 249-269 traverse the membrane as a helical segment; the sequence is ITSLAIFNTHLCTATSILVWI. Over 270–281 the chain is Cytoplasmic; the sequence is SLDMAVYKKGSL. Residues 282–302 form a helical membrane-spanning segment; that stretch reads IGSVQGMMTGLVCITPGAGLV. Residues 303–304 lie on the Extracellular side of the membrane; it reads DP. The chain crosses the membrane as a helical span at residues 305–325; the sequence is WAAILMGALSGSIPWYTMMVL. Residues 326-338 lie on the Cytoplasmic side of the membrane; the sequence is HKKSPFFQSVDDT. A helical transmembrane segment spans residues 339 to 359; the sequence is LGVFHTHAVAGILGGILSGVF. Topologically, residues 360–363 are extracellular; sequence AKPK. A helical transmembrane segment spans residues 364 to 381; that stretch reads LLRILYGPYGSGLLYSYF. At 382 to 395 the chain is on the cytoplasmic side; sequence DDNIGQGIKQMWYQ. A helical transmembrane segment spans residues 396-416; it reads LLGAVFITIWNVVITSLICIL. Topologically, residues 417 to 481 are extracellular; it reads LNRFVNLRMQ…HSFPINKIDE (65 aa).

It belongs to the ammonia transporter channel (TC 1.A.11.2) family. In terms of tissue distribution, mostly expressed in mycorrhizal roots. Also observed in the cortex and endodermis of non-mycorrhizal roots.

It localises to the cell membrane. In terms of biological role, involved in ammonium transport. Required for arbuscular mycorrhizal (AM) symbiosis with AM fungi (e.g. Glomus versiforme and G.intraradices) in low nitrogen conditions. This is Ammonium transporter 2 member 3 from Medicago truncatula (Barrel medic).